The sequence spans 159 residues: Virion assembly protein OPG100 (159 aa).

It belongs to the orthopoxvirus OPG100 family. In terms of assembly, homodimer. Part of a complex composed of the kinase OPG054, OPG092, OPG114, OPG115, OPG142 and OPG157. Interacts with OPG175.

It localises to the virion. The protein localises to the host cytoplasm. Its function is as follows. Late protein which is a part of a large complex required for early virion morphogenesis. This complex participates in the formation of virosomes and the incorporation of virosomal contents into nascent immature virions. Plays a role in DNA packaging during immature virions (IV) formation. This Homo sapiens (Human) protein is Virion assembly protein OPG100 (OPG100).